The chain runs to 318 residues: MNNELIEYNLHFSKTIKLTFLKDWSFITVTGKDCFNYLQGQITYNLKLLKSNKHIICSHCTIDGKVLSILRLFMHNDGYAYILRKSTSKFQINELKKYSIFSHVNICQKKDIILLGIMGREARTKLLQIFKNIPHERDSVYQENDVIILKYDQPHERYLIIIKKHNLILNKILSLVDKIYHHKIWLALEIASNFPIIDYNINKKFFPQSLNLEKLNGLDLKKGCYYGQEMIAKIHFKKLNKHYLHWLSGYSYPIPKIGDNIEQKKNKNFSSCGWILSVVKLSTTKIWIQAVLKHYNHYKTNVFRIKNKINSFFYITDE.

2 residues coordinate folate: W24 and W185.

Belongs to the tRNA-modifying YgfZ family.

The protein localises to the cytoplasm. In terms of biological role, folate-binding protein involved in regulating the level of ATP-DnaA and in the modification of some tRNAs. It is probably a key factor in regulatory networks that act via tRNA modification, such as initiation of chromosomal replication. This chain is tRNA-modifying protein YgfZ, found in Buchnera aphidicola subsp. Baizongia pistaciae (strain Bp).